A 160-amino-acid polypeptide reads, in one-letter code: MIIEHKMAKEKQETELEITNETDTTTELTVEKQGKELIAQTNLSSSNLIKEFEREQLKKQLPEIYVGDTVKVGVKITEGNKERVQPYEGVVIAKRHGGLHQTITVRRIFQGIGVERVFMLHSPQVASLKVERRGKVRRAKLFYLRDRVGKATRVKQRFDR.

Belongs to the bacterial ribosomal protein bL19 family.

In terms of biological role, this protein is located at the 30S-50S ribosomal subunit interface and may play a role in the structure and function of the aminoacyl-tRNA binding site. The polypeptide is Large ribosomal subunit protein bL19 (Prochlorococcus marinus subsp. pastoris (strain CCMP1986 / NIES-2087 / MED4)).